The chain runs to 337 residues: Alcohol dehydrogenase (337 aa).

The Zn(2+) site is built by cysteine 38, histidine 61, cysteine 92, cysteine 95, cysteine 98, cysteine 106, and cysteine 148. Residues 172–177 (GIGGLG), aspartate 195, lysine 200, 260–262 (VGL), and arginine 331 contribute to the NAD(+) site.

This sequence belongs to the zinc-containing alcohol dehydrogenase family. It depends on Zn(2+) as a cofactor.

It carries out the reaction a primary alcohol + NAD(+) = an aldehyde + NADH + H(+). It catalyses the reaction a secondary alcohol + NAD(+) = a ketone + NADH + H(+). Substrate inhibition is not observed with any alcohols, and the enzyme-NADH dissociation is not considered to be a rate-limiting step. Its function is as follows. NAD(+)-dependent alcohol dehydrogenase. The sequence is that of Alcohol dehydrogenase (adhT) from Geobacillus stearothermophilus (Bacillus stearothermophilus).